A 343-amino-acid chain; its full sequence is Holliday junction branch migration complex subunit RuvB (343 aa).

The interval 4–184 (SDRLISAKAG…FGIVQRLEFY (181 aa)) is large ATPase domain (RuvB-L). ATP-binding positions include Ile-23, Arg-24, Gly-65, Lys-68, Thr-69, Thr-70, 131–133 (EDY), Arg-174, Tyr-184, and Arg-221. Thr-69 is a Mg(2+) binding site. The small ATPAse domain (RuvB-S) stretch occupies residues 185–255 (NHQDLTHIIT…IADQALNMLK (71 aa)). Residues 258–343 (SQGFDHMDRR…RSGREDDLFE (86 aa)) form a head domain (RuvB-H) region. DNA contacts are provided by Arg-294, Arg-313, and Arg-318.

Belongs to the RuvB family. As to quaternary structure, homohexamer. Forms an RuvA(8)-RuvB(12)-Holliday junction (HJ) complex. HJ DNA is sandwiched between 2 RuvA tetramers; dsDNA enters through RuvA and exits via RuvB. An RuvB hexamer assembles on each DNA strand where it exits the tetramer. Each RuvB hexamer is contacted by two RuvA subunits (via domain III) on 2 adjacent RuvB subunits; this complex drives branch migration. In the full resolvosome a probable DNA-RuvA(4)-RuvB(12)-RuvC(2) complex forms which resolves the HJ.

The protein resides in the cytoplasm. The catalysed reaction is ATP + H2O = ADP + phosphate + H(+). The RuvA-RuvB-RuvC complex processes Holliday junction (HJ) DNA during genetic recombination and DNA repair, while the RuvA-RuvB complex plays an important role in the rescue of blocked DNA replication forks via replication fork reversal (RFR). RuvA specifically binds to HJ cruciform DNA, conferring on it an open structure. The RuvB hexamer acts as an ATP-dependent pump, pulling dsDNA into and through the RuvAB complex. RuvB forms 2 homohexamers on either side of HJ DNA bound by 1 or 2 RuvA tetramers; 4 subunits per hexamer contact DNA at a time. Coordinated motions by a converter formed by DNA-disengaged RuvB subunits stimulates ATP hydrolysis and nucleotide exchange. Immobilization of the converter enables RuvB to convert the ATP-contained energy into a lever motion, pulling 2 nucleotides of DNA out of the RuvA tetramer per ATP hydrolyzed, thus driving DNA branch migration. The RuvB motors rotate together with the DNA substrate, which together with the progressing nucleotide cycle form the mechanistic basis for DNA recombination by continuous HJ branch migration. Branch migration allows RuvC to scan DNA until it finds its consensus sequence, where it cleaves and resolves cruciform DNA. The chain is Holliday junction branch migration complex subunit RuvB from Marinobacter nauticus (strain ATCC 700491 / DSM 11845 / VT8) (Marinobacter aquaeolei).